Consider the following 198-residue polypeptide: Ribosomal RNA small subunit methyltransferase G (198 aa).

S-adenosyl-L-methionine contacts are provided by residues glycine 74, phenylalanine 79, isoleucine 123–glutamine 124, and arginine 136.

Belongs to the methyltransferase superfamily. RNA methyltransferase RsmG family.

The protein resides in the cytoplasm. It catalyses the reaction guanosine(527) in 16S rRNA + S-adenosyl-L-methionine = N(7)-methylguanosine(527) in 16S rRNA + S-adenosyl-L-homocysteine. Functionally, specifically methylates the N7 position of guanine in position 527 of 16S rRNA. This is Ribosomal RNA small subunit methyltransferase G from Orientia tsutsugamushi (strain Ikeda) (Rickettsia tsutsugamushi).